Here is a 1457-residue protein sequence, read N- to C-terminus: Bridge-like lipid transfer protein family member 3B (1457 aa).

Residues 3–94 form the Chorein N-terminal domain; it reads GIIKKQILKH…DKVIMEMSTC (92 aa). 2 disordered regions span residues 267-295 and 409-449; these read STEQRKSMAPEPTQSSTVTSSAQHVKTPQ and DRNL…PQPS. A compositionally biased stretch (polar residues) spans 278–295; that stretch reads PTQSSTVTSSAQHVKTPQ. Ser-414, Ser-418, Ser-774, and Ser-934 each carry phosphoserine. 3 disordered regions span residues 975–1038, 1056–1099, and 1145–1183; these read SEDE…TGKG, ASLS…LSVS, and SNTSCQSPAESVNTSANTQTCGEASPEAVSTNSEGTQEN. Residues 980–995 are compositionally biased toward polar residues; the sequence is SGLSHKSGSGEMTSEG. Ser-1008 carries the post-translational modification Phosphoserine. Over residues 1145–1180 the composition is skewed to polar residues; it reads SNTSCQSPAESVNTSANTQTCGEASPEAVSTNSEGT. The stretch at 1410–1455 forms a coiled coil; that stretch reads ANFLDITREQLMEENECLRQRLAQAKMELAEAHSARDELLHQMKRM.

In terms of assembly, homodimer (via N-terminus). Associates with the Golgi-associated retrograde protein (GARP) complex. Interacts with GARP complex component VPS52. Interacts (via C-terminal coiled-coil domain) with STX6.

It localises to the cytoplasm. The protein localises to the cytosol. The protein resides in the early endosome. Functionally, tube-forming lipid transport protein which mediates the transfer of lipids between membranes at organelle contact sites. Required for retrograde traffic of vesicle clusters in the early endocytic pathway to the Golgi complex. This chain is Bridge-like lipid transfer protein family member 3B (Bltp3b), found in Mus musculus (Mouse).